The sequence spans 335 residues: Glycerol-3-phosphate dehydrogenase [NAD(P)+] (335 aa).

3 residues coordinate NADPH: Trp14, Arg33, and Lys111. Lys111, Gly140, and Ser142 together coordinate sn-glycerol 3-phosphate. Ala144 is an NADPH binding site. Sn-glycerol 3-phosphate contacts are provided by Lys195, Asp248, Ser258, Arg259, and Asn260. Residue Lys195 is the Proton acceptor of the active site. Residue Arg259 participates in NADPH binding. The NADPH site is built by Val283 and Glu285.

It belongs to the NAD-dependent glycerol-3-phosphate dehydrogenase family.

The protein localises to the cytoplasm. The catalysed reaction is sn-glycerol 3-phosphate + NAD(+) = dihydroxyacetone phosphate + NADH + H(+). It catalyses the reaction sn-glycerol 3-phosphate + NADP(+) = dihydroxyacetone phosphate + NADPH + H(+). The protein operates within membrane lipid metabolism; glycerophospholipid metabolism. Catalyzes the reduction of the glycolytic intermediate dihydroxyacetone phosphate (DHAP) to sn-glycerol 3-phosphate (G3P), the key precursor for phospholipid synthesis. The sequence is that of Glycerol-3-phosphate dehydrogenase [NAD(P)+] from Burkholderia mallei (strain NCTC 10247).